Here is a 282-residue protein sequence, read N- to C-terminus: 4-hydroxy-tetrahydrodipicolinate reductase (282 aa).

Residues 14–19 (GAMGRM) and 115–117 (GTT) each bind NAD(+). Residue histidine 171 is the Proton donor/acceptor of the active site. Residue histidine 172 coordinates (S)-2,3,4,5-tetrahydrodipicolinate. Lysine 175 acts as the Proton donor in catalysis. Residue 181-182 (GT) participates in (S)-2,3,4,5-tetrahydrodipicolinate binding.

This sequence belongs to the DapB family.

It is found in the cytoplasm. The enzyme catalyses (S)-2,3,4,5-tetrahydrodipicolinate + NAD(+) + H2O = (2S,4S)-4-hydroxy-2,3,4,5-tetrahydrodipicolinate + NADH + H(+). It catalyses the reaction (S)-2,3,4,5-tetrahydrodipicolinate + NADP(+) + H2O = (2S,4S)-4-hydroxy-2,3,4,5-tetrahydrodipicolinate + NADPH + H(+). Its pathway is amino-acid biosynthesis; L-lysine biosynthesis via DAP pathway; (S)-tetrahydrodipicolinate from L-aspartate: step 4/4. In terms of biological role, catalyzes the conversion of 4-hydroxy-tetrahydrodipicolinate (HTPA) to tetrahydrodipicolinate. This is 4-hydroxy-tetrahydrodipicolinate reductase from Prochlorococcus marinus (strain NATL2A).